The primary structure comprises 494 residues: Glutamate--tRNA ligase (494 aa).

The 'HIGH' region signature appears at 10–20 (PSPTGDPHVGT). 4 residues coordinate Zn(2+): C107, C109, C134, and H136. Positions 251-255 (KLSKR) match the 'KMSKS' region motif. K254 provides a ligand contact to ATP.

The protein belongs to the class-I aminoacyl-tRNA synthetase family. Glutamate--tRNA ligase type 1 subfamily. In terms of assembly, monomer. Zn(2+) is required as a cofactor.

It localises to the cytoplasm. The enzyme catalyses tRNA(Glu) + L-glutamate + ATP = L-glutamyl-tRNA(Glu) + AMP + diphosphate. In terms of biological role, catalyzes the attachment of glutamate to tRNA(Glu) in a two-step reaction: glutamate is first activated by ATP to form Glu-AMP and then transferred to the acceptor end of tRNA(Glu). The chain is Glutamate--tRNA ligase from Pseudomonas paraeruginosa (strain DSM 24068 / PA7) (Pseudomonas aeruginosa (strain PA7)).